The following is a 280-amino-acid chain: Transcription factor ovo-like homolog lin-48 (280 aa).

4 C2H2-type zinc fingers span residues 133 to 155 (LTCHICGKKFGLQRLLNRHIKCH), 161 to 183 (YLCTFCGKGFNDTFDLKRHTRTH), 189 to 212 (YKCEQCEKSFTQRCSLESHLRKVH), and 228 to 251 (FVCEDCGYTDEKFEVYLSHIKVVH).

Its subcellular location is the nucleus. Its function is as follows. Transcription factor. Involved in development of the hindgut, the male tail, and the excretory duct cell. Involved in modulating function of excretory duct cells. Plays a role in left/right patterning of cell fates in the hindgut. The polypeptide is Transcription factor ovo-like homolog lin-48 (Caenorhabditis elegans).